Reading from the N-terminus, the 1155-residue chain is ATP-dependent helicase/deoxyribonuclease subunit B (1155 aa).

8 to 15 lines the ATP pocket; the sequence is GRSGSGKS. The [4Fe-4S] cluster site is built by Cys793, Cys1115, Cys1118, and Cys1124.

Belongs to the helicase family. AddB/RexB type 1 subfamily. In terms of assembly, heterodimer of AddA and AddB. The cofactor is Mg(2+). It depends on [4Fe-4S] cluster as a cofactor.

The heterodimer acts as both an ATP-dependent DNA helicase and an ATP-dependent, dual-direction single-stranded exonuclease. Recognizes the chi site generating a DNA molecule suitable for the initiation of homologous recombination. The AddB subunit has 5' -&gt; 3' nuclease activity but not helicase activity. The protein is ATP-dependent helicase/deoxyribonuclease subunit B of Clostridioides difficile (strain 630) (Peptoclostridium difficile).